A 193-amino-acid chain; its full sequence is Tetrahydromethanopterin S-methyltransferase subunit A 2 (193 aa).

Residues 1 to 38 (MADKKPTAENWPVVSGDYIVGDPESPVAVTTLASHNED) are Cytoplasmic-facing. A helical transmembrane segment spans residues 39–58 (IPAAAGAAIAGPCKTENLGI). Over 59–193 (EKVVANIISN…SESEKIESEA (135 aa)) the chain is Extracellular. Histidine 84 provides a ligand contact to 5-hydroxybenzimidazolylcob(I)amide. The interval 174 to 193 (SKKSSFVESSSESEKIESEA) is disordered.

This sequence belongs to the MtrA family. The complex is composed of 8 subunits; MtrA, MtrB, MtrC, MtrD, MtrE, MtrF, MtrG and MtrH. The cofactor is 5-hydroxybenzimidazolylcob(I)amide.

The protein localises to the cell membrane. The catalysed reaction is 5-methyl-5,6,7,8-tetrahydromethanopterin + coenzyme M + 2 Na(+)(in) = 5,6,7,8-tetrahydromethanopterin + methyl-coenzyme M + 2 Na(+)(out). The protein operates within one-carbon metabolism; methanogenesis from CO(2); methyl-coenzyme M from 5,10-methylene-5,6,7,8-tetrahydromethanopterin: step 2/2. Part of a complex that catalyzes the formation of methyl-coenzyme M and tetrahydromethanopterin from coenzyme M and methyl-tetrahydromethanopterin. This is an energy-conserving, sodium-ion translocating step. This Methanobrevibacter ruminantium (strain ATCC 35063 / DSM 1093 / JCM 13430 / OCM 146 / M1) (Methanobacterium ruminantium) protein is Tetrahydromethanopterin S-methyltransferase subunit A 2.